The sequence spans 299 residues: Homoserine kinase (299 aa).

84 to 94 is an ATP binding site; the sequence is PISRGLGSSSA.

This sequence belongs to the GHMP kinase family. Homoserine kinase subfamily.

Its subcellular location is the cytoplasm. The enzyme catalyses L-homoserine + ATP = O-phospho-L-homoserine + ADP + H(+). It participates in amino-acid biosynthesis; L-threonine biosynthesis; L-threonine from L-aspartate: step 4/5. Catalyzes the ATP-dependent phosphorylation of L-homoserine to L-homoserine phosphate. The protein is Homoserine kinase of Helicobacter hepaticus (strain ATCC 51449 / 3B1).